Here is a 503-residue protein sequence, read N- to C-terminus: Lanosterol 14-alpha demethylase (503 aa).

The chain crosses the membrane as a helical span at residues glycine 24–phenylalanine 44. Cysteine 449 provides a ligand contact to heme.

This sequence belongs to the cytochrome P450 family. Heme is required as a cofactor. In terms of processing, ubiquitinated by MARCHF6, leading to proteasomal degradation.

It is found in the endoplasmic reticulum membrane. The protein resides in the microsome membrane. The catalysed reaction is a 14alpha-methyl steroid + 3 reduced [NADPH--hemoprotein reductase] + 3 O2 = a Delta(14) steroid + formate + 3 oxidized [NADPH--hemoprotein reductase] + 4 H2O + 4 H(+). The enzyme catalyses lanosterol + 3 reduced [NADPH--hemoprotein reductase] + 3 O2 = 4,4-dimethyl-5alpha-cholesta-8,14,24-trien-3beta-ol + formate + 3 oxidized [NADPH--hemoprotein reductase] + 4 H2O + 4 H(+). It catalyses the reaction 24,25-dihydrolanosterol + 3 reduced [NADPH--hemoprotein reductase] + 3 O2 = 4,4-dimethyl-8,14-cholestadien-3beta-ol + formate + 3 oxidized [NADPH--hemoprotein reductase] + 4 H2O + 4 H(+). It carries out the reaction a 14alpha-methyl steroid + reduced [NADPH--hemoprotein reductase] + O2 = a 14alpha-hydroxymethyl steroid + oxidized [NADPH--hemoprotein reductase] + H2O + H(+). The catalysed reaction is a 14alpha-hydroxymethyl steroid + reduced [NADPH--hemoprotein reductase] + O2 = a 14alpha-formyl steroid + oxidized [NADPH--hemoprotein reductase] + 2 H2O + H(+). The enzyme catalyses a 14alpha-formyl steroid + reduced [NADPH--hemoprotein reductase] + O2 = a Delta(14) steroid + formate + oxidized [NADPH--hemoprotein reductase] + H2O + 2 H(+). It catalyses the reaction lanosterol + reduced [NADPH--hemoprotein reductase] + O2 = 32-hydroxylanosterol + oxidized [NADPH--hemoprotein reductase] + H2O + H(+). It carries out the reaction 32-hydroxylanosterol + reduced [NADPH--hemoprotein reductase] + O2 = 32-oxolanosterol + oxidized [NADPH--hemoprotein reductase] + 2 H2O + H(+). The catalysed reaction is 32-oxolanosterol + reduced [NADPH--hemoprotein reductase] + O2 = 4,4-dimethyl-5alpha-cholesta-8,14,24-trien-3beta-ol + formate + oxidized [NADPH--hemoprotein reductase] + H2O + 2 H(+). The enzyme catalyses 24,25-dihydrolanosterol + reduced [NADPH--hemoprotein reductase] + O2 = 32-hydroxy-24,25-dihydrolanosterol + oxidized [NADPH--hemoprotein reductase] + H2O + H(+). It catalyses the reaction 32-hydroxy-24,25-dihydrolanosterol + reduced [NADPH--hemoprotein reductase] + O2 = 32-oxo-24,25-dihydrolanosterol + oxidized [NADPH--hemoprotein reductase] + 2 H2O + H(+). It carries out the reaction 32-oxo-24,25-dihydrolanosterol + reduced [NADPH--hemoprotein reductase] + O2 = 4,4-dimethyl-8,14-cholestadien-3beta-ol + formate + oxidized [NADPH--hemoprotein reductase] + H2O + 2 H(+). It participates in steroid biosynthesis; zymosterol biosynthesis; zymosterol from lanosterol: step 1/6. Its activity is regulated as follows. Inhibited by azalanstat. Inhibited by azole antifungal agents ketoconazole, itraconazole and fluconazole. Functionally, sterol 14alpha-demethylase that plays a critical role in the cholesterol biosynthesis pathway, being cholesterol the major sterol component in mammalian membranes as well as a precursor for bile acid and steroid hormone synthesis. Cytochrome P450 monooxygenase that catalyzes the three-step oxidative removal of the 14alpha-methyl group (C-32) of sterols such as lanosterol (lanosta-8,24-dien-3beta-ol) and 24,25-dihydrolanosterol (DHL) in the form of formate, and converts the sterols to 4,4-dimethyl-5alpha-cholesta-8,14,24-trien-3beta-ol and 4,4-dimethyl-8,14-cholestadien-3beta-ol, respectively, which are intermediates of cholesterol biosynthesis. Can also demethylate substrates not intrinsic to mammals, such as eburicol (24-methylene-24,25-dihydrolanosterol), but at a lower rate than DHL. This chain is Lanosterol 14-alpha demethylase, found in Rattus norvegicus (Rat).